Here is a 723-residue protein sequence, read N- to C-terminus: Multiple organellar RNA editing factor 4, mitochondrial (723 aa).

The N-terminal 64 residues, 1–64 (MAMFSHRLRR…RLFSTTQYQY (64 aa)), are a transit peptide targeting the mitochondrion. Disordered regions lie at residues 180–303 (ITPG…GQTQ), 318–474 (RQEM…EGQP), and 663–723 (QNGG…NSRI). Residues 191 to 204 (EGFDSLKKESKPEQ) are compositionally biased toward basic and acidic residues. 4 stretches are compositionally biased toward polar residues: residues 219-233 (TSGQ…TLPD), 273-303 (GQWQ…GQTQ), 327-365 (GQAQ…QGAQ), and 373-430 (QGAQ…NYSP). Low complexity-rich tracts occupy residues 459 to 474 (QGQG…EGQP) and 682 to 695 (QGFS…TFQQ). Over residues 714–723 (TETRKPNSRI) the composition is skewed to basic and acidic residues.

The protein belongs to the MORF family. Heterodimers with MORF8/RIP1, MORF1/RIP8 and MORF3/RIP3.

Its subcellular location is the mitochondrion. Functionally, involved in organellar RNA editing. Required for the processing of few RNA editing site in mitochondria. The sequence is that of Multiple organellar RNA editing factor 4, mitochondrial from Arabidopsis thaliana (Mouse-ear cress).